Reading from the N-terminus, the 631-residue chain is Phosphomethylpyrimidine synthase (631 aa).

Residues asparagine 239, methionine 268, tyrosine 297, histidine 333, 353 to 355 (SRG), 394 to 397 (DGLR), and glutamate 433 contribute to the substrate site. Zn(2+) is bound at residue histidine 437. Tyrosine 460 contributes to the substrate binding site. Histidine 501 lines the Zn(2+) pocket. Cysteine 581, cysteine 584, and cysteine 589 together coordinate [4Fe-4S] cluster.

This sequence belongs to the ThiC family. In terms of assembly, homodimer. The cofactor is [4Fe-4S] cluster.

It catalyses the reaction 5-amino-1-(5-phospho-beta-D-ribosyl)imidazole + S-adenosyl-L-methionine = 4-amino-2-methyl-5-(phosphooxymethyl)pyrimidine + CO + 5'-deoxyadenosine + formate + L-methionine + 3 H(+). It participates in cofactor biosynthesis; thiamine diphosphate biosynthesis. In terms of biological role, catalyzes the synthesis of the hydroxymethylpyrimidine phosphate (HMP-P) moiety of thiamine from aminoimidazole ribotide (AIR) in a radical S-adenosyl-L-methionine (SAM)-dependent reaction. The protein is Phosphomethylpyrimidine synthase of Escherichia coli (strain SMS-3-5 / SECEC).